Here is a 134-residue protein sequence, read N- to C-terminus: Profilin-3 (134 aa).

C13 and C118 are joined by a disulfide. An Involved in PIP2 interaction motif is present at residues 84 to 100 (AVIRGKKGSGGITSKKT). A Phosphothreonine modification is found at T114.

This sequence belongs to the profilin family. In terms of assembly, occurs in many kinds of cells as a complex with monomeric actin in a 1:1 ratio. In terms of processing, phosphorylated by MAP kinases.

The protein localises to the cytoplasm. It localises to the cytoskeleton. In terms of biological role, binds to actin and affects the structure of the cytoskeleton. At high concentrations, profilin prevents the polymerization of actin, whereas it enhances it at low concentrations. This chain is Profilin-3, found in Olea europaea (Common olive).